Consider the following 307-residue polypeptide: Zygote arrest protein 2.L (307 aa).

The tract at residues 138 to 200 is disordered; sequence LPQGGRLPKK…EEPGNEEQTK (63 aa). A compositionally biased stretch (basic and acidic residues) spans 156-186; that stretch reads LKERAPSPEDKEREKVSEKEPDTKDELEKRP. The 3CxxC-type zinc finger occupies 208 to 293; sequence QKYGYFHCKD…QELCGRCKNK (86 aa).

It belongs to the ZAR1 family. As to expression, expressed in oocytes.

The protein localises to the cytoplasm. It is found in the cytoplasmic ribonucleoprotein granule. Functionally, mRNA-binding protein required for maternal mRNA storage, translation and degradation during oocyte maturation. Probably promotes formation of some phase-separated membraneless compartment that stores maternal mRNAs in oocytes: acts by undergoing liquid-liquid phase separation upon binding to maternal mRNAs. Binds to the 3'-UTR of maternal mRNAs, inhibiting their translation. This chain is Zygote arrest protein 2.L (zar2.L), found in Xenopus laevis (African clawed frog).